The primary structure comprises 666 residues: NADH-ubiquinone oxidoreductase chain 5 (666 aa).

The next 17 helical transmembrane spans lie at L3–L23, F31–G51, I59–F78, T82–I101, I119–G139, L168–N190, F211–I231, T251–I271, I283–V303, V311–D333, F337–I357, F375–F395, Y421–F441, L467–I487, W524–L544, V572–L594, and Y629–I649.

This sequence belongs to the complex I subunit 5 family.

The protein localises to the mitochondrion inner membrane. The catalysed reaction is a ubiquinone + NADH + 5 H(+)(in) = a ubiquinol + NAD(+) + 4 H(+)(out). Core subunit of the mitochondrial membrane respiratory chain NADH dehydrogenase (Complex I) that is believed to belong to the minimal assembly required for catalysis. Complex I functions in the transfer of electrons from NADH to the respiratory chain. The immediate electron acceptor for the enzyme is believed to be ubiquinone. The protein is NADH-ubiquinone oxidoreductase chain 5 (ND5) of Chondrus crispus (Carrageen Irish moss).